Here is a 551-residue protein sequence, read N- to C-terminus: Eukaryotic translation initiation factor 3 subunit D-2 (551 aa).

Residues 108–152 (RARGRTGRGNATLGGLGGPVAGGSTANSTKYGKGRNTRNAQNMGR) are disordered. The span at 119–128 (TLGGLGGPVA) shows a compositional bias: gly residues. Residues 290-304 (QFDLLTVNETSLEPP) form an RNA gate region. The segment at 530 to 551 (AFDSDGDDESESSEPFGNSIDN) is disordered. Residues 531–541 (FDSDGDDESES) show a composition bias toward acidic residues.

It belongs to the eIF-3 subunit D family. As to quaternary structure, component of the eukaryotic translation initiation factor 3 (eIF-3) complex. The eIF-3 complex interacts with pix.

Its subcellular location is the cytoplasm. In terms of biological role, mRNA cap-binding component of the eukaryotic translation initiation factor 3 (eIF-3) complex, which is involved in protein synthesis of a specialized repertoire of mRNAs and, together with other initiation factors, stimulates binding of mRNA and methionyl-tRNAi to the 40S ribosome. The eIF-3 complex specifically targets and initiates translation of a subset of mRNAs involved in cell proliferation. In the eIF-3 complex, eif3d specifically recognizes and binds the 7-methylguanosine cap of a subset of mRNAs. This is Eukaryotic translation initiation factor 3 subunit D-2 from Drosophila yakuba (Fruit fly).